Here is a 354-residue protein sequence, read N- to C-terminus: Ornithine transcarbamylase, mitochondrial (354 aa).

The transit peptide at 1–32 directs the protein to the mitochondrion; that stretch reads MLFNLRILLNNAAFRNGHNFMVRNFRCGQPLQ. At Lys70 the chain carries N6-acetyllysine; alternate. Lys70 is modified (N6-succinyllysine; alternate). An N6-succinyllysine modification is found at Lys80. Lys88 is subject to N6-acetyllysine; alternate. Lys88 carries the N6-succinyllysine; alternate modification. 90–93 provides a ligand contact to carbamoyl phosphate; sequence STRT. A Phosphoserine modification is found at Ser133. Arg141 contributes to the carbamoyl phosphate binding site. Position 144 is an N6-acetyllysine; alternate (Lys144). Lys144 bears the N6-succinyllysine; alternate mark. Carbamoyl phosphate-binding residues include His168 and Gln171. Residue Asn199 coordinates L-ornithine. Lys221, Lys231, and Lys238 each carry N6-acetyllysine; alternate. N6-succinyllysine; alternate is present on residues Lys221, Lys231, and Lys238. N6-acetyllysine is present on Lys243. L-ornithine is bound by residues Asp263, Ser267, and Met268. N6-succinyllysine is present on residues Lys274 and Lys289. Lys292 bears the N6-acetyllysine; alternate mark. Lys292 carries the N6-succinyllysine; alternate modification. The active-site Proton acceptor is Cys303. 303-304 is a carbamoyl phosphate binding site; that stretch reads CL. Lys307 carries the post-translational modification N6-acetyllysine; alternate. An N6-succinyllysine; alternate modification is found at Lys307. Arg330 is a carbamoyl phosphate binding site.

Belongs to the aspartate/ornithine carbamoyltransferase superfamily. OTCase family. In terms of assembly, homotrimer. Acetylation at Lys-88 negatively regulates ornithine carbamoyltransferase activity in response to nutrient signals. As to expression, mainly expressed in liver and intestinal mucosa.

It localises to the mitochondrion matrix. The enzyme catalyses carbamoyl phosphate + L-ornithine = L-citrulline + phosphate + H(+). It functions in the pathway nitrogen metabolism; urea cycle; L-citrulline from L-ornithine and carbamoyl phosphate: step 1/1. With respect to regulation, negatively regulated by lysine acetylation. In terms of biological role, catalyzes the second step of the urea cycle, the condensation of carbamoyl phosphate with L-ornithine to form L-citrulline. The urea cycle ensures the detoxification of ammonia by converting it to urea for excretion. In Homo sapiens (Human), this protein is Ornithine transcarbamylase, mitochondrial.